Here is a 200-residue protein sequence, read N- to C-terminus: MDRVAGQVNSRRGELLELAAAMFAERGLRATTVRDIADGAGILSGSLYHHFASKEEMVDELLRGFLDWLFARYRDIVDSTANPLERLQGLFMASFEAIEHHHAQVVIYQDEAQRLASQPRFSYIEDRNKQQRKMWVDVLNQGIEEGYFRPDLDVDLVYRFIRDTTWVSVRWYRPGGPLTAQQVGQQYLAIVLGGITKEGV.

The region spanning 9 to 69 (NSRRGELLEL…ELLRGFLDWL (61 aa)) is the HTH tetR-type domain. A DNA-binding region (H-T-H motif) is located at residues 32–51 (TVRDIADGAGILSGSLYHHF).

In terms of assembly, homodimer.

In terms of biological role, controls the expression of a small regulon that may play a role in the utilization of cholesterol. The polypeptide is HTH-type transcriptional repressor KstR2 (kstR2) (Mycobacterium tuberculosis (strain CDC 1551 / Oshkosh)).